Reading from the N-terminus, the 480-residue chain is Vacuolar amino acid transporter 2 (480 aa).

Residues 21-48 form a disordered region; sequence LTNFPFPGTTDNDSDDGSQGQNSLNIIT. A compositionally biased stretch (polar residues) spans 37-46; that stretch reads GSQGQNSLNI. A run of 9 helical transmembrane segments spans residues 72–92, 95–115, 145–165, 214–234, 263–283, 297–317, 338–358, 394–414, and 447–467; these read AFMNLANSILGAGIITQPFAI, AGILGGLLSYVALGFIVDWTL, LILFTNGLFAFGGCIGYCIII, LSKASFLAVISMIIIVLTVVI, LSVISFALVCHHNTSFIFFSM, ISIIISVICCALMGYSGFAVF, IARLCFGFNMLTTFPMEIFVL, VFITMGISLTTCNLGALFELI, and FYLCICFGFMIMIISSTQTII.

This sequence belongs to the amino acid/polyamine transporter 2 family.

The protein localises to the vacuole membrane. In terms of biological role, probable amino acid transporter of unknown specificity. The chain is Vacuolar amino acid transporter 2 (AVT2) from Saccharomyces cerevisiae (strain ATCC 204508 / S288c) (Baker's yeast).